The primary structure comprises 405 residues: S-adenosylmethionine:tRNA ribosyltransferase-isomerase (405 aa).

The protein belongs to the QueA family. As to quaternary structure, monomer.

The protein localises to the cytoplasm. It catalyses the reaction 7-aminomethyl-7-carbaguanosine(34) in tRNA + S-adenosyl-L-methionine = epoxyqueuosine(34) in tRNA + adenine + L-methionine + 2 H(+). It participates in tRNA modification; tRNA-queuosine biosynthesis. Transfers and isomerizes the ribose moiety from AdoMet to the 7-aminomethyl group of 7-deazaguanine (preQ1-tRNA) to give epoxyqueuosine (oQ-tRNA). The chain is S-adenosylmethionine:tRNA ribosyltransferase-isomerase from Psychrobacter cryohalolentis (strain ATCC BAA-1226 / DSM 17306 / VKM B-2378 / K5).